Reading from the N-terminus, the 546-residue chain is Beta-amylase (546 aa).

A signal peptide spans Met1–Ala30. Substrate is bound at residue Asp79. Ca(2+) is bound by residues Glu86, Asp90, and Gln91. Substrate is bound by residues His119 and Asp127. Cys121 and Cys129 are joined by a disulfide. Ca(2+) is bound by residues Glu171 and Glu174. Catalysis depends on Glu202, which acts as the Proton donor. 3 residues coordinate substrate: Lys317, His322, and Thr360. The Proton acceptor role is filled by Glu397. Residues Asn398 to Ala399 and Arg427 contribute to the substrate site. The 103-residue stretch at Leu444–Trp546 folds into the CBM20 domain.

The protein belongs to the glycosyl hydrolase 14 family. In terms of assembly, monomer. Ca(2+) serves as cofactor.

It catalyses the reaction Hydrolysis of (1-&gt;4)-alpha-D-glucosidic linkages in polysaccharides so as to remove successive maltose units from the non-reducing ends of the chains.. This chain is Beta-amylase (spoII), found in Bacillus cereus.